Reading from the N-terminus, the 132-residue chain is Small ribosomal subunit protein uS8 (132 aa).

The protein belongs to the universal ribosomal protein uS8 family. In terms of assembly, part of the 30S ribosomal subunit. Contacts proteins S5 and S12.

Functionally, one of the primary rRNA binding proteins, it binds directly to 16S rRNA central domain where it helps coordinate assembly of the platform of the 30S subunit. This is Small ribosomal subunit protein uS8 from Lactobacillus delbrueckii subsp. bulgaricus (strain ATCC BAA-365 / Lb-18).